The chain runs to 153 residues: ORM1-like protein 2 (153 aa).

Topologically, residues 1-21 (MNVGVAHSEVNPNTRVMNSRG) are cytoplasmic. Helical transmembrane passes span 22–42 (IWLA…SIPF) and 43–63 (FSIP…TYVF). The Cytoplasmic segment spans residues 64–105 (LHTVKGTPFETPDQGKARLLTHWEQMDYGLQFTSSRKFLSIS). A helical transmembrane segment spans residues 106–126 (PIVLYLLASFYTKYDAAHFLI). Residues 127–153 (NTASLLSVLLPKLPQFHGVRVFGINKY) lie on the Extracellular side of the membrane.

It belongs to the ORM family. In terms of assembly, ceramide-sensitive subunit of the serine palmitoyltransferase (SPT) complex, which is also composed of SPTLC1, SPTLC2/3 and SPTSSA/B. Widely expressed. Expressed in adult and fetal heart, brain, lung, liver, skeletal muscle and kidney. Expressed in adult pancreas and placenta and in fetal spleen abd thymus.

It localises to the endoplasmic reticulum membrane. Functionally, plays an essential role in the homeostatic regulation of sphingolipid de novo biosynthesis by modulating the activity of the serine palmitoyltransferase (SPT) in response to ceramide levels. When complexed to SPT, the binding of ceramides to its N-terminus stabilizes a conformation that block SPT substrate entry, hence preventing SPT catalytic activity. Through this mechanism, maintains ceramide levels at sufficient concentrations for the production of complex sphingolipids, but which prevents the accumulation of ceramides to levels that trigger apoptosis. This chain is ORM1-like protein 2 (ORMDL2), found in Homo sapiens (Human).